The sequence spans 274 residues: Probable WRKY transcription factor 49 (274 aa).

Positions 108-173 (NSNGMCDDGY…YEGFHFHYTY (66 aa)) form a DNA-binding region, WRKY. Residues 188 to 228 (KTKIHKHNAQDMNKKSQTQEESKEAQLGELTNQNHPVNKAQ) form a disordered region. Positions 193 to 222 (KHNAQDMNKKSQTQEESKEAQLGELTNQNH) form a coiled coil. Over residues 195–213 (NAQDMNKKSQTQEESKEAQ) the composition is skewed to basic and acidic residues. A compositionally biased stretch (polar residues) spans 216–228 (ELTNQNHPVNKAQ).

This sequence belongs to the WRKY group II-c family.

The protein localises to the nucleus. Functionally, transcription factor. Interacts specifically with the W box (5'-(T)TGAC[CT]-3'), a frequently occurring elicitor-responsive cis-acting element. The protein is Probable WRKY transcription factor 49 (WRKY49) of Arabidopsis thaliana (Mouse-ear cress).